Here is a 403-residue protein sequence, read N- to C-terminus: Acetate kinase (403 aa).

Residue Asn-7 coordinates Mg(2+). ATP is bound at residue Lys-14. Arg-90 is a binding site for substrate. The Proton donor/acceptor role is filled by Asp-147. Residues 207–211 (HIGNG), 283–285 (DMR), and 331–335 (GVGEN) each bind ATP. A Mg(2+)-binding site is contributed by Glu-386.

This sequence belongs to the acetokinase family. As to quaternary structure, homodimer. The cofactor is Mg(2+). Mn(2+) serves as cofactor.

It localises to the cytoplasm. It carries out the reaction acetate + ATP = acetyl phosphate + ADP. Its pathway is metabolic intermediate biosynthesis; acetyl-CoA biosynthesis; acetyl-CoA from acetate: step 1/2. Its function is as follows. Catalyzes the formation of acetyl phosphate from acetate and ATP. Can also catalyze the reverse reaction. In Thermotoga petrophila (strain ATCC BAA-488 / DSM 13995 / JCM 10881 / RKU-1), this protein is Acetate kinase.